The chain runs to 218 residues: Glycerol-3-phosphate acyltransferase (218 aa).

5 helical membrane passes run 4 to 24 (IALGMIIFAYLCGSISSAILI), 54 to 74 (TAAIVLICDVLKGMIPVWLAY), 80 to 100 (PFYLGITAIAACLGHIYPIFF), 107 to 127 (GVATAFGAIAAIGWDLTGLMM), and 130 to 150 (WLLTILLSGYSSLGAIVSALI).

This sequence belongs to the PlsY family. Probably interacts with PlsX.

The protein localises to the cell inner membrane. The enzyme catalyses an acyl phosphate + sn-glycerol 3-phosphate = a 1-acyl-sn-glycero-3-phosphate + phosphate. The protein operates within lipid metabolism; phospholipid metabolism. Its function is as follows. Catalyzes the transfer of an acyl group from acyl-phosphate (acyl-PO(4)) to glycerol-3-phosphate (G3P) to form lysophosphatidic acid (LPA). This enzyme utilizes acyl-phosphate as fatty acyl donor, but not acyl-CoA or acyl-ACP. The polypeptide is Glycerol-3-phosphate acyltransferase (Photorhabdus laumondii subsp. laumondii (strain DSM 15139 / CIP 105565 / TT01) (Photorhabdus luminescens subsp. laumondii)).